A 153-amino-acid chain; its full sequence is MKVTRHEKILELIERKDIETQEELAEELRKSGIEITQATVSRDIKELKLIKVLGEQGKYKYAAIVKNENDLSDKLANIFSHSVVSVENINNFVVVKTLSGSGNAAAEAIDSLNFKEIAGTIAGDNTIFIMARTSEQAFEIVKKMKRVIRERGV.

It belongs to the ArgR family.

The protein localises to the cytoplasm. The protein operates within amino-acid biosynthesis; L-arginine biosynthesis [regulation]. Regulates arginine biosynthesis genes. The polypeptide is Arginine repressor (Clostridium tetani (strain Massachusetts / E88)).